Reading from the N-terminus, the 316-residue chain is Ornithine carbamoyltransferase (316 aa).

Carbamoyl phosphate-binding positions include 57–60 (STRT), Gln84, Arg108, and 135–138 (HPCQ). Residues Asn166, Asp230, and 234–235 (SM) contribute to the L-ornithine site. Residues 269–270 (CL) and Arg297 contribute to the carbamoyl phosphate site.

Belongs to the aspartate/ornithine carbamoyltransferase superfamily. OTCase family.

The protein resides in the cytoplasm. The enzyme catalyses carbamoyl phosphate + L-ornithine = L-citrulline + phosphate + H(+). Its pathway is amino-acid degradation; L-arginine degradation via ADI pathway; carbamoyl phosphate from L-arginine: step 2/2. Reversibly catalyzes the transfer of the carbamoyl group from carbamoyl phosphate (CP) to the N(epsilon) atom of ornithine (ORN) to produce L-citrulline. The chain is Ornithine carbamoyltransferase from Bacillus cereus (strain AH187).